Reading from the N-terminus, the 123-residue chain is Large ribosomal subunit protein eL8 (123 aa).

The protein belongs to the eukaryotic ribosomal protein eL8 family. In terms of assembly, part of the 50S ribosomal subunit. Probably part of the RNase P complex.

It is found in the cytoplasm. In terms of biological role, multifunctional RNA-binding protein that recognizes the K-turn motif in ribosomal RNA, the RNA component of RNase P, box H/ACA, box C/D and box C'/D' sRNAs. This is Large ribosomal subunit protein eL8 from Methanothermobacter thermautotrophicus (strain ATCC 29096 / DSM 1053 / JCM 10044 / NBRC 100330 / Delta H) (Methanobacterium thermoautotrophicum).